Consider the following 209-residue polypeptide: GTP cyclohydrolase-2 (209 aa).

49-53 (RIHSE) is a binding site for GTP. Zn(2+) contacts are provided by Cys54, Cys65, and Cys67. GTP-binding positions include Gln70, 92–94 (EGR), and Thr114. Asp126 acts as the Proton acceptor in catalysis. The active-site Nucleophile is the Arg128. Thr149 and Lys154 together coordinate GTP.

Belongs to the GTP cyclohydrolase II family. Requires Zn(2+) as cofactor.

The enzyme catalyses GTP + 4 H2O = 2,5-diamino-6-hydroxy-4-(5-phosphoribosylamino)-pyrimidine + formate + 2 phosphate + 3 H(+). Its pathway is cofactor biosynthesis; riboflavin biosynthesis; 5-amino-6-(D-ribitylamino)uracil from GTP: step 1/4. In terms of biological role, catalyzes the conversion of GTP to 2,5-diamino-6-ribosylamino-4(3H)-pyrimidinone 5'-phosphate (DARP), formate and pyrophosphate. The chain is GTP cyclohydrolase-2 from Shewanella halifaxensis (strain HAW-EB4).